Here is a 483-residue protein sequence, read N- to C-terminus: Keratin, type II cytoskeletal 8 (483 aa).

Polar residues predominate over residues 1 to 16 (MSIRVTQKSYKVSTSG). Residues 1–41 (MSIRVTQKSYKVSTSGPRAFSSRSYTSGPGSRISSSSFSRV) form a disordered region. Residues 1–90 (MSIRVTQKSY…DPNIQAVRTQ (90 aa)) are head. Residue S9 is modified to Phosphoserine; by PKC/PRKCE. K11 is covalently cross-linked (Glycyl lysine isopeptide (Lys-Gly) (interchain with G-Cter in SUMO2)). Phosphoserine is present on residues S13, S15, S21, and S22. Residue R23 is modified to Omega-N-methylarginine. Phosphoserine; by PKC/PRKCE is present on S24. The span at 24-41 (SYTSGPGSRISSSSFSRV) shows a compositional bias: low complexity. Position 26 is a phosphothreonine (T26). Phosphoserine occurs at positions 27 and 31. R32 carries the post-translational modification Omega-N-methylarginine. Phosphoserine occurs at positions 34, 37, and 39. R40 is subject to Omega-N-methylarginine. Phosphoserine is present on residues S43 and S44. Asymmetric dimethylarginine; alternate is present on R47. The residue at position 47 (R47) is an Omega-N-methylarginine; alternate. S74 is modified (phosphoserine; by MAPK). The tract at residues 91–126 (EKEQIKTLNNKFASFIDKVRFLEQQNKMLETKWSLL) is coil 1A. The region spanning 91–402 (EKEQIKTLNN…KLLEGEESRL (312 aa)) is the IF rod domain. N6-malonyllysine is present on K101. Glycyl lysine isopeptide (Lys-Gly) (interchain with G-Cter in SUMO2) cross-links involve residues K122 and K130. The linker 1 stretch occupies residues 127 to 143 (QQQKTARSNMDNMFESY). Residues 144–235 (INNLRRQLET…QLYEEEIREL (92 aa)) form a coil 1B region. K197 is covalently cross-linked (Glycyl lysine isopeptide (Lys-Gly) (interchain with G-Cter in SUMO1); alternate). A Glycyl lysine isopeptide (Lys-Gly) (interchain with G-Cter in SUMO2); alternate cross-link involves residue K197. Residue K207 is modified to N6-acetyllysine. Y228 is subject to Phosphotyrosine. Positions 236–259 (QSQISDTSVVLSMDNSRSLDMDSI) are linker 12. 2 positions are modified to phosphoserine: S253 and S258. Residues 260-398 (IAEVKAQYED…ATYRKLLEGE (139 aa)) form a coil 2 region. Residues 261–382 (AEVKAQYEDI…EYQELMNVKL (122 aa)) form a necessary for interaction with PNN region. A Glycyl lysine isopeptide (Lys-Gly) (interchain with G-Cter in SUMO2) cross-link involves residue K264. The residue at position 274 (S274) is a Phosphoserine. Residue K285 forms a Glycyl lysine isopeptide (Lys-Gly) (interchain with G-Cter in SUMO2) linkage. At S291 the chain carries Phosphoserine. K295 participates in a covalent cross-link: Glycyl lysine isopeptide (Lys-Gly) (interchain with G-Cter in SUMO2); alternate. K295 bears the N6-acetyllysine; alternate mark. A Glycyl lysine isopeptide (Lys-Gly) (interchain with G-Cter in SUMO2) cross-link involves residue K304. K325 participates in a covalent cross-link: Glycyl lysine isopeptide (Lys-Gly) (interchain with G-Cter in SUMO2); alternate. N6-acetyllysine; alternate is present on K325. S330 bears the Phosphoserine mark. A Glycyl lysine isopeptide (Lys-Gly) (interchain with G-Cter in SUMO2) cross-link involves residue K393. The tract at residues 399–483 (ESRLESGMQN…VSESSDVLPK (85 aa)) is tail. A phosphoserine mark is found at S400, S404, S410, S417, and S424. S432 carries the phosphoserine; by CaMK2 and MAPK modification. A Glycyl lysine isopeptide (Lys-Gly) (interchain with G-Cter in SUMO1); alternate cross-link involves residue K472. Residue K472 forms a Glycyl lysine isopeptide (Lys-Gly) (interchain with G-Cter in SUMO2); alternate linkage. Residues S475, S477, and S478 each carry the phosphoserine modification.

Belongs to the intermediate filament family. Heterotetramer of two type I and two type II keratins. Forms a heterodimer with KRT18. Associates with KRT20. Interacts with PLEC isoform 1C, when in a heterodimer with KRT18. Interacts with PNN. When associated with KRT19, interacts with DMD. Interacts with TCHP. Interacts with APEX1. Interacts with GPER1. Interacts with EPPK1. Interacts with PKP1 and PKP2. In terms of assembly, (Microbial infection) Interacts with hepatitis C virus/HCV core protein. Post-translationally, phosphorylation on serine residues is enhanced during EGF stimulation and mitosis. Ser-74 phosphorylation plays an important role in keratin filament reorganization. In terms of processing, O-glycosylated. O-GlcNAcylation at multiple sites increases solubility, and decreases stability by inducing proteasomal degradation. O-glycosylated (O-GlcNAcylated), in a cell cycle-dependent manner. As to expression, observed in muscle fibers accumulating in the costameres of myoplasm at the sarcolemma membrane in structures that contain dystrophin and spectrin. Expressed in gingival mucosa and hard palate of the oral cavity.

Its subcellular location is the cytoplasm. The protein localises to the nucleus. It localises to the nucleoplasm. It is found in the nucleus matrix. In terms of biological role, together with KRT19, helps to link the contractile apparatus to dystrophin at the costameres of striated muscle. This Homo sapiens (Human) protein is Keratin, type II cytoskeletal 8 (KRT8).